A 363-amino-acid polypeptide reads, in one-letter code: Glycerol-3-phosphate dehydrogenase [NAD(+)], cytoplasmic (363 aa).

Residues 11–16 (GSGNWG), Phe-98, Lys-121, and Ala-155 each bind NAD(+). Residue Lys-121 participates in substrate binding. Residue Lys-206 is the Proton acceptor of the active site. Residues Arg-270 and Gln-299 each contribute to the NAD(+) site. 270–271 (RN) contributes to the substrate binding site.

Belongs to the NAD-dependent glycerol-3-phosphate dehydrogenase family. Homodimer. In terms of tissue distribution, isoform GPDH-1 is predominant in thorax and isoform GPDH-3 in abdomen.

Its subcellular location is the cytoplasm. The catalysed reaction is sn-glycerol 3-phosphate + NAD(+) = dihydroxyacetone phosphate + NADH + H(+). Its pathway is phospholipid metabolism; alpha-glycerophosphate cycle. The protein is Glycerol-3-phosphate dehydrogenase [NAD(+)], cytoplasmic of Drosophila melanogaster (Fruit fly).